The primary structure comprises 416 residues: Lactose permease (416 aa).

At 1–13 (MKLSELAPRERHN) the chain is on the cytoplasmic side. A helical transmembrane segment spans residues 14–34 (FIYFMLFFFFYYFIMSAYFPF). Topologically, residues 35–50 (FPVWLAEVNHLTKTET) are periplasmic. The chain crosses the membrane as a helical span at residues 51 to 71 (GIVFSCISLFAIIFQPVFGLI). At 72 to 80 (SDKLGLRKH) the chain is on the cytoplasmic side. Residues 81–101 (LLWTITILLILFAPFFIFVFS) form a helical membrane-spanning segment. Position 102 (P102) is a topological domain, periplasmic. A helical membrane pass occupies residues 103–123 (LLQMNIMAGALVGGVYLGIVF). The Cytoplasmic portion of the chain corresponds to 124–149 (SSRSGAVEAYIERVSRANRFEYGKVR). 2 helical membrane passes run 150 to 170 (VSGC…FSID) and 171 to 191 (PNIT…LLWV). Over 192 to 223 (SKPESSNSAEVIDALGANRQAFSMRTAAELFR) the chain is Cytoplasmic. A helical membrane pass occupies residues 224–244 (MPRFWGFIIYVVGVASVYDVF). Topologically, residues 245–267 (DQQFANFFKGFFSSPQRGTEVFG) are periplasmic. A helical membrane pass occupies residues 268–288 (FVTTGGELLNALIMFCAPAII). Over 289–295 (NRIGAKN) the chain is Cytoplasmic. The next 2 membrane-spanning stretches (helical) occupy residues 296–316 (ALLI…FATS) and 317–337 (AVEV…LLVG). The Cytoplasmic portion of the chain corresponds to 338-353 (TFKYISSAFKGKLSAT). The chain crosses the membrane as a helical span at residues 354 to 374 (LFLIGFNLSKQLSSVVLSAWV). Topologically, residues 375 to 384 (GRMYDTVGFH) are periplasmic. A helical transmembrane segment spans residues 385–405 (QAYLILGCITLSFTVISLFTL). The Cytoplasmic segment spans residues 406–416 (KGSKTLLPATA).

It belongs to the major facilitator superfamily. Oligosaccharide:H(+) symporter (OHS) (TC 2.A.1.5) family.

Its subcellular location is the cell inner membrane. It catalyses the reaction lactose(in) + H(+)(in) = lactose(out) + H(+)(out). Its function is as follows. Responsible for transport of beta-galactosides into the cell, with the concomitant import of a proton (symport system). In Klebsiella oxytoca, this protein is Lactose permease (lacY).